The primary structure comprises 329 residues: uncharacterized protein (329 aa).

An SIS domain is found at 38-184 (IVKLILKSQE…MACLMRAKNF (147 aa)). 56–61 (GVGKSA) contributes to the ATP binding site. 2 consecutive CBS domains span residues 211–267 (QTTN…GVSL) and 270–329 (EVRH…GLKA).

The protein belongs to the SIS family. GutQ/KpsF subfamily.

This is an uncharacterized protein from Helicobacter pylori (strain ATCC 700392 / 26695) (Campylobacter pylori).